Consider the following 189-residue polypeptide: GTP cyclohydrolase 1 (189 aa).

3 residues coordinate Zn(2+): C78, H81, and C150.

Belongs to the GTP cyclohydrolase I family. In terms of assembly, homomer.

The enzyme catalyses GTP + H2O = 7,8-dihydroneopterin 3'-triphosphate + formate + H(+). It functions in the pathway cofactor biosynthesis; 7,8-dihydroneopterin triphosphate biosynthesis; 7,8-dihydroneopterin triphosphate from GTP: step 1/1. The polypeptide is GTP cyclohydrolase 1 (Bacillus cytotoxicus (strain DSM 22905 / CIP 110041 / 391-98 / NVH 391-98)).